The following is a 190-amino-acid chain: Protein LZIC (190 aa).

Positions 2–63 (ASRGKTETSK…SEFNDSLKKI (62 aa)) form a coiled coil.

This sequence belongs to the CTNNBIP1 family. As to quaternary structure, does not interact with CTNNB1. As to expression, ubiquitously expressed, with highest levels in kidney. Up-regulated in several cases of gastric cancers.

The sequence is that of Protein LZIC (LZIC) from Homo sapiens (Human).